Here is a 478-residue protein sequence, read N- to C-terminus: Phenylalanine--tRNA ligase alpha subunit (478 aa).

L-phenylalanine is bound by residues Thr318, 357 to 359 (QLE), and Tyr397. Residue Glu399 coordinates Mg(2+). L-phenylalanine is bound at residue Phe422.

This sequence belongs to the class-II aminoacyl-tRNA synthetase family. Phe-tRNA synthetase alpha subunit type 2 subfamily. In terms of assembly, tetramer of two alpha and two beta subunits. Mg(2+) serves as cofactor.

It localises to the cytoplasm. It carries out the reaction tRNA(Phe) + L-phenylalanine + ATP = L-phenylalanyl-tRNA(Phe) + AMP + diphosphate + H(+). This chain is Phenylalanine--tRNA ligase alpha subunit, found in Methanospirillum hungatei JF-1 (strain ATCC 27890 / DSM 864 / NBRC 100397 / JF-1).